The primary structure comprises 54 residues: MARNELRPVIKLRSTAGTGFTYVTRKNRRNDPDRMTLRKYDPIARRHVDFREER.

The protein belongs to the bacterial ribosomal protein bL33 family.

This is Large ribosomal subunit protein bL33A from Streptomyces avermitilis (strain ATCC 31267 / DSM 46492 / JCM 5070 / NBRC 14893 / NCIMB 12804 / NRRL 8165 / MA-4680).